Reading from the N-terminus, the 144-residue chain is Transcription antitermination protein NusB (144 aa).

The protein belongs to the NusB family.

Functionally, involved in transcription antitermination. Required for transcription of ribosomal RNA (rRNA) genes. Binds specifically to the boxA antiterminator sequence of the ribosomal RNA (rrn) operons. The protein is Transcription antitermination protein NusB of Haemophilus influenzae (strain PittGG).